Consider the following 180-residue polypeptide: Translation initiation factor IF-3 (180 aa).

Belongs to the IF-3 family. In terms of assembly, monomer.

The protein resides in the cytoplasm. Functionally, IF-3 binds to the 30S ribosomal subunit and shifts the equilibrium between 70S ribosomes and their 50S and 30S subunits in favor of the free subunits, thus enhancing the availability of 30S subunits on which protein synthesis initiation begins. In Xylella fastidiosa (strain Temecula1 / ATCC 700964), this protein is Translation initiation factor IF-3.